The following is a 341-amino-acid chain: L-threonine 3-dehydrogenase (341 aa).

Residue cysteine 38 participates in Zn(2+) binding. Residues threonine 40 and histidine 43 each act as charge relay system in the active site. Zn(2+) is bound by residues histidine 63, glutamate 64, cysteine 93, cysteine 96, cysteine 99, and cysteine 107. Residues isoleucine 175, aspartate 195, arginine 200, 262-264 (LGI), and 286-287 (IY) each bind NAD(+).

The protein belongs to the zinc-containing alcohol dehydrogenase family. In terms of assembly, homotetramer. It depends on Zn(2+) as a cofactor.

The protein resides in the cytoplasm. The catalysed reaction is L-threonine + NAD(+) = (2S)-2-amino-3-oxobutanoate + NADH + H(+). It participates in amino-acid degradation; L-threonine degradation via oxydo-reductase pathway; glycine from L-threonine: step 1/2. Functionally, catalyzes the NAD(+)-dependent oxidation of L-threonine to 2-amino-3-ketobutyrate. The polypeptide is L-threonine 3-dehydrogenase (Yersinia enterocolitica serotype O:8 / biotype 1B (strain NCTC 13174 / 8081)).